Reading from the N-terminus, the 874-residue chain is Dynein regulatory complex subunit 7 (874 aa).

Residues 1 to 20 form a disordered region; sequence MEVLREKVEEEEEAEREEAA. Coiled-coil stretches lie at residues 1–67 and 257–297; these read MEVL…SAEL and RFEQ…DALH. A compositionally biased stretch (acidic residues) spans 386-400; sequence TEEDDSGINDEDDVE. Residues 386 to 410 are disordered; it reads TEEDDSGINDEDDVENLGKEDEDKS. The span at 401–410 shows a compositional bias: basic and acidic residues; it reads NLGKEDEDKS.

This sequence belongs to the DRC7 family. In terms of assembly, component of the nexin-dynein regulatory complex (N-DRC). Interacts with TCTE1/DRC5. Interacts with DRC3 and GAS8/DRC4. Expressed in the testis.

Its subcellular location is the cell projection. The protein resides in the cilium. The protein localises to the flagellum. It is found in the cytoplasm. It localises to the cytoskeleton. Its subcellular location is the cilium axoneme. The protein resides in the flagellum axoneme. In terms of biological role, component of the nexin-dynein regulatory complex (N-DRC) a key regulator of ciliary/flagellar motility which maintains the alignment and integrity of the distal axoneme and regulates microtubule sliding in motile axonemes. Involved in the regulation of flagellar motility. Essential for male fertility, sperm head morphogenesis and sperm flagellum formation. This is Dynein regulatory complex subunit 7 (DRC7) from Pan troglodytes (Chimpanzee).